The sequence spans 206 residues: 3-demethoxyubiquinol 3-hydroxylase (206 aa).

Glu-55, Glu-85, His-88, Glu-137, Glu-169, and His-172 together coordinate Fe cation.

The protein belongs to the COQ7 family. Fe cation serves as cofactor.

It is found in the cell membrane. The catalysed reaction is a 5-methoxy-2-methyl-3-(all-trans-polyprenyl)benzene-1,4-diol + AH2 + O2 = a 3-demethylubiquinol + A + H2O. It functions in the pathway cofactor biosynthesis; ubiquinone biosynthesis. In terms of biological role, catalyzes the hydroxylation of 2-nonaprenyl-3-methyl-6-methoxy-1,4-benzoquinol during ubiquinone biosynthesis. This Chromobacterium violaceum (strain ATCC 12472 / DSM 30191 / JCM 1249 / CCUG 213 / NBRC 12614 / NCIMB 9131 / NCTC 9757 / MK) protein is 3-demethoxyubiquinol 3-hydroxylase.